We begin with the raw amino-acid sequence, 188 residues long: Peptidyl-tRNA hydrolase (188 aa).

Tyrosine 14 contributes to the tRNA binding site. The Proton acceptor role is filled by histidine 19. Residues tyrosine 64, asparagine 66, and asparagine 112 each coordinate tRNA.

It belongs to the PTH family. In terms of assembly, monomer.

The protein localises to the cytoplasm. The catalysed reaction is an N-acyl-L-alpha-aminoacyl-tRNA + H2O = an N-acyl-L-amino acid + a tRNA + H(+). Functionally, hydrolyzes ribosome-free peptidyl-tRNAs (with 1 or more amino acids incorporated), which drop off the ribosome during protein synthesis, or as a result of ribosome stalling. Catalyzes the release of premature peptidyl moieties from peptidyl-tRNA molecules trapped in stalled 50S ribosomal subunits, and thus maintains levels of free tRNAs and 50S ribosomes. This Bacillus pumilus (strain SAFR-032) protein is Peptidyl-tRNA hydrolase.